Consider the following 379-residue polypeptide: Alkanesulfonate monooxygenase (379 aa).

The protein belongs to the SsuD family.

It catalyses the reaction an alkanesulfonate + FMNH2 + O2 = an aldehyde + FMN + sulfite + H2O + 2 H(+). In terms of biological role, catalyzes the desulfonation of aliphatic sulfonates. This is Alkanesulfonate monooxygenase from Pseudomonas syringae pv. tomato (strain ATCC BAA-871 / DC3000).